A 673-amino-acid chain; its full sequence is Putative K(+)-stimulated pyrophosphate-energized sodium pump (673 aa).

The next 5 helical transmembrane spans lie at 3-23, 62-82, 84-104, 127-147, and 154-174; these read SFIV…FMLS, IVIV…ACFI, GAIF…KANV, VMGM…YYIF, and VTGF…GGGI. Lys177 contacts substrate. Residues Asp180, Asp184, Asn207, and Asp210 each coordinate Mg(2+). A run of 6 helical transmembrane segments spans residues 222–242, 247–267, 279–299, 302–322, 364–384, and 387–407; these read LFES…VVYA, VMFP…GILF, ALNT…AILS, IFGN…GMII, LWPI…MGGG, and AMVG…TTGL. Mg(2+) is bound at residue Asp419. A run of 4 helical transmembrane segments spans residues 449–469, 486–506, 553–573, and 576–596; these read AAIG…SLFA, VTLV…ALTM, EMIL…LLLG, and ALGG…ILMS. Residues Asp603, Asp629, and Asp633 each coordinate Ca(2+). Position 636 (Lys636) interacts with substrate. A helical membrane pass occupies residues 652 to 672; the sequence is IVSLVFAPVVLQYGGILLNLI.

This sequence belongs to the H(+)-translocating pyrophosphatase (TC 3.A.10) family. K(+)-stimulated subfamily. In terms of assembly, homodimer. Requires Mg(2+) as cofactor.

The protein localises to the cell membrane. It catalyses the reaction Na(+)(in) + diphosphate + H2O = Na(+)(out) + 2 phosphate + H(+). Its activity is regulated as follows. Requires K(+) for maximal activity. Functionally, sodium pump that utilizes the energy of pyrophosphate hydrolysis as the driving force for Na(+) movement across the membrane. The protein is Putative K(+)-stimulated pyrophosphate-energized sodium pump of Clostridium tetani (strain Massachusetts / E88).